Consider the following 192-residue polypeptide: uncharacterized protein (192 aa).

One can recognise a Nudix hydrolase domain in the interval 29–160; it reads QRQAAVLVPV…PLDIHRRGNH (132 aa). Positions 67-89 match the Nudix box motif; the sequence is GAVDDTDASLIAAALREAQEEVA. Mg(2+) is bound by residues E83 and E87.

It belongs to the Nudix hydrolase family. PCD1 subfamily. It depends on Mn(2+) as a cofactor. Mg(2+) serves as cofactor.

Its function is as follows. Probably mediates the hydrolysis of some nucleoside diphosphate derivatives. This is an uncharacterized protein from Cronobacter sakazakii (strain ATCC BAA-894) (Enterobacter sakazakii).